We begin with the raw amino-acid sequence, 276 residues long: Prohibitin 1 (276 aa).

It belongs to the prohibitin family.

Functionally, required for larval metabolism or for the progression of the larva into a pupa. In Drosophila melanogaster (Fruit fly), this protein is Prohibitin 1.